Reading from the N-terminus, the 872-residue chain is Trichohyalin-like protein 1 (872 aa).

The region spanning 46–81 (CAIHAVERNLNLLNIDSNGAISFDEFVLAIFSFLNV) is the EF-hand domain. Positions 117 to 127 (QWTEGTSQTQD) are enriched in polar residues. 3 disordered regions span residues 117–759 (QWTE…ERGA), 774–813 (LQQTNVTQGEHQNQAQTASVASPEIRRNQSSASLTNDSSD), and 830–872 (EFLP…APKQ). 8 stretches are compositionally biased toward basic and acidic residues: residues 142–155 (SLEERAVEHNRVDP), 164–190 (LPVETSEHSDSKNQHLKGDEQSQKVDQ), 218–235 (TKGEGQNKEILQKGDILA), 296–307 (GKDEPSSEHVDL), 324–348 (AAKDESRTAETPEPPIQEKEYETRD), 365–375 (RVERKGVRGPE), 399–435 (EDKKYHELQESSKEKNAGEDSETHELNSEGGEQKDSE), and 486–505 (SGEKNKMTTKIHDKLVKEDD). Over residues 538 to 570 (NSETSDLFVQGDSQSQTNPFRGSVQGSDSNNPE) the composition is skewed to polar residues. Composition is skewed to basic and acidic residues over residues 571–584 (TQKHLALSEEKRVQ), 592–608 (RGEDEQVTEEHAQEHEG), and 664–684 (TKKDSRKELKDQSPSTKKEED). Composition is skewed to polar residues over residues 699-708 (ENNAVSQKTC) and 718-729 (SPQQLAGEQSLS). Residues 730–751 (TKEHDPSVSESGLEERMQRDQE) show a composition bias toward basic and acidic residues. Composition is skewed to polar residues over residues 774 to 793 (LQQTNVTQGEHQNQAQTASV) and 801 to 812 (NQSSASLTNDSS). Over residues 849–865 (LEDKQGRPQREELEPQK) the composition is skewed to basic and acidic residues.

Belongs to the S-100 family.

The polypeptide is Trichohyalin-like protein 1 (TCHHL1) (Bos taurus (Bovine)).